The primary structure comprises 154 residues: Ribonuclease H (154 aa).

Positions 1–142 constitute an RNase H type-1 domain; sequence MTPKLVIYTD…ADELARLGML (142 aa). The Mg(2+) site is built by Asp-10, Glu-48, Asp-70, and Asp-134.

Belongs to the RNase H family. In terms of assembly, monomer. Mg(2+) is required as a cofactor.

The protein resides in the cytoplasm. It carries out the reaction Endonucleolytic cleavage to 5'-phosphomonoester.. Its function is as follows. Endonuclease that specifically degrades the RNA of RNA-DNA hybrids. This Caulobacter sp. (strain K31) protein is Ribonuclease H.